A 458-amino-acid polypeptide reads, in one-letter code: Ribulose bisphosphate carboxylase (458 aa).

Substrate is bound at residue asparagine 111. Lysine 166 functions as the Proton acceptor in the catalytic mechanism. A substrate-binding site is contributed by lysine 168. Residues lysine 191, aspartate 193, and glutamate 194 each contribute to the Mg(2+) site. Lysine 191 bears the N6-carboxylysine mark. The active-site Proton acceptor is histidine 287. Residues arginine 288, histidine 321, and serine 368 each coordinate substrate.

It belongs to the RuBisCO large chain family. Type II subfamily. In terms of assembly, homodimer. The cofactor is Mg(2+).

The catalysed reaction is 2 (2R)-3-phosphoglycerate + 2 H(+) = D-ribulose 1,5-bisphosphate + CO2 + H2O. It carries out the reaction D-ribulose 1,5-bisphosphate + O2 = 2-phosphoglycolate + (2R)-3-phosphoglycerate + 2 H(+). In terms of biological role, ruBisCO catalyzes two reactions: the carboxylation of D-ribulose 1,5-bisphosphate, the primary event in carbon dioxide fixation, as well as the oxidative fragmentation of the pentose substrate. Both reactions occur simultaneously and in competition at the same active site. The chain is Ribulose bisphosphate carboxylase (cbbM) from Rhodobacter capsulatus (Rhodopseudomonas capsulata).